Consider the following 228-residue polypeptide: N-(5'-phosphoribosyl)anthranilate isomerase (228 aa).

It belongs to the TrpF family.

It catalyses the reaction N-(5-phospho-beta-D-ribosyl)anthranilate = 1-(2-carboxyphenylamino)-1-deoxy-D-ribulose 5-phosphate. It functions in the pathway amino-acid biosynthesis; L-tryptophan biosynthesis; L-tryptophan from chorismate: step 3/5. In Azorhizobium caulinodans (strain ATCC 43989 / DSM 5975 / JCM 20966 / LMG 6465 / NBRC 14845 / NCIMB 13405 / ORS 571), this protein is N-(5'-phosphoribosyl)anthranilate isomerase.